The primary structure comprises 44 residues: Photosystem I reaction center subunit IX (44 aa).

Residues 7–27 (YLSTAPVLAISWLIFVAGLLI) traverse the membrane as a helical segment.

Belongs to the PsaJ family.

It is found in the plastid. Its subcellular location is the chloroplast thylakoid membrane. Functionally, may help in the organization of the PsaE and PsaF subunits. In Larix decidua (European larch), this protein is Photosystem I reaction center subunit IX.